The following is a 323-amino-acid chain: PTS system mannose-specific EIIAB component (323 aa).

The PTS EIIA type-4 domain occupies 2 to 124 (TIAIVIGTHG…VALAVETGRE (123 aa)). His-10 serves as the catalytic Tele-phosphohistidine intermediate; for EIIA activity. His-10 is modified (phosphohistidine; by HPr). The residue at position 55 (Lys-55) is an N6-acetyllysine. Positions 137–155 (AAPAPAAAAPKAAPTPAKP) are hinge. A PTS EIIB type-4 domain is found at 157–320 (GPNDYMVIGL…KLKMMDLISK (164 aa)). Residue His-175 is the Pros-phosphohistidine intermediate; for EIIB activity of the active site. Residue His-175 is modified to Phosphohistidine; by EIIA. At Lys-234 the chain carries N6-acetyllysine.

In terms of assembly, homodimer.

It is found in the cytoplasm. It localises to the cell inner membrane. It carries out the reaction D-mannose(out) + N(pros)-phospho-L-histidyl-[protein] = D-mannose 6-phosphate(in) + L-histidyl-[protein]. Functionally, the phosphoenolpyruvate-dependent sugar phosphotransferase system (sugar PTS), a major carbohydrate active transport system, catalyzes the phosphorylation of incoming sugar substrates concomitantly with their translocation across the cell membrane. The enzyme II ManXYZ PTS system is involved in mannose transport. In Escherichia coli O157:H7, this protein is PTS system mannose-specific EIIAB component (manX).